Consider the following 213-residue polypeptide: ATP phosphoribosyltransferase (213 aa).

It belongs to the ATP phosphoribosyltransferase family. Short subfamily. Heteromultimer composed of HisG and HisZ subunits.

The protein localises to the cytoplasm. It carries out the reaction 1-(5-phospho-beta-D-ribosyl)-ATP + diphosphate = 5-phospho-alpha-D-ribose 1-diphosphate + ATP. It functions in the pathway amino-acid biosynthesis; L-histidine biosynthesis; L-histidine from 5-phospho-alpha-D-ribose 1-diphosphate: step 1/9. Its function is as follows. Catalyzes the condensation of ATP and 5-phosphoribose 1-diphosphate to form N'-(5'-phosphoribosyl)-ATP (PR-ATP). Has a crucial role in the pathway because the rate of histidine biosynthesis seems to be controlled primarily by regulation of HisG enzymatic activity. In Chromobacterium violaceum (strain ATCC 12472 / DSM 30191 / JCM 1249 / CCUG 213 / NBRC 12614 / NCIMB 9131 / NCTC 9757 / MK), this protein is ATP phosphoribosyltransferase.